A 799-amino-acid chain; its full sequence is Zinc finger X-linked protein ZXDA (799 aa).

The disordered stretch occupies residues 1–89; that stretch reads MEIPKLLPAR…QPSGGGDDFF (89 aa). Gly residues predominate over residues 13-26; sequence LQGGGGGGIPAGGG. 10 C2H2-type zinc fingers span residues 267-291, 300-324, 330-354, 360-382, 389-413, 420-444, 450-474, 480-504, 510-534, and 543-568; these read YLCP…LLTH, FKCP…LQSH, FGCP…MKGH, FKCE…QRSH, YQCA…NRAH, FSCS…LRSH, FLCD…KRKH, FMCP…SITH, FVCP…SKKH, and SRCP…VKRH. The segment at 267 to 573 is required for interaction with ZXDC; sequence YLCPEALCGQ…MVKRHKVGQD (307 aa). The tract at residues 572-699 is required for transcriptional activation; sequence QDLLAQLEAA…NMDEVSSVSV (128 aa).

This sequence belongs to the ZXD family. As to quaternary structure, self-associates. Interacts with ZXDC and CIITA. As to expression, may be expressed in brain, heart, kidney, liver, lung, muscle and placenta.

It localises to the nucleus. Functionally, cooperates with CIITA to promote transcription of MHC class I and MHC class II genes. In Homo sapiens (Human), this protein is Zinc finger X-linked protein ZXDA (ZXDA).